Here is a 1346-residue protein sequence, read N- to C-terminus: Pikromycin polyketide synthase component PikAIV (1346 aa).

Residues 3–32 are a coiled coil; sequence SSNEQLVDALRASLKENEELRKESRRRADR. The region spanning 34-461 is the Ketosynthase family 3 (KS3) domain; sequence QEPMAIVGMS…GTNAHVVLEE (428 aa). The segment at 37–1332 is module 6; the sequence is MAIVGMSCRF…HAPAVAEAVL (1296 aa). Residues Cys207, His342, and His382 each act as for beta-ketoacyl synthase activity in the active site. The segment at 562 to 844 is acyltransferase; that stretch reads FVFPGQGTQW…VLTMTLPDKV (283 aa). The active-site Acyl-ester intermediate; for acyltransferase activity is the Ser652. Residues 945–1020 enclose the Carrier domain; that stretch reads SAVLAMVMRQ…ALAERISDEL (76 aa). At Ser980 the chain carries O-(pantetheine 4'-phosphoryl)serine. The interval 1028-1050 is disordered; sequence AEPSDHEQAEEEKAAAPAGARSG. The span at 1030–1041 shows a compositional bias: basic and acidic residues; sequence PSDHEQAEEEKA. Thr1125 is a binding site for substrate. The tract at residues 1127–1332 is thioesterase; it reads ANGGPHEFLR…HAPAVAEAVL (206 aa). Ser1196 (nucleophile; for thioesterase activity) is an active-site residue. Positions 1197 and 1224 each coordinate substrate. The active-site Proton acceptor; for thioesterase activity is the His1316.

Homodimer. Pikromycin PKS consists of a combination of multimodular (PikAI and PikAII) and monomodular (PikAIII and PikAIV) polypeptides each coding for a functional synthase subunit which participates in 1 (monomodular) or 2 (multimodular) of the six FAS-like elongation steps required for formation of the polyketide. Module 1, 2, 3, 4, 5, and 6 participating in biosynthesis steps 1, 2, 3, 4, 5, and 6, respectively. Requires pantetheine 4'-phosphate as cofactor.

The catalysed reaction is 5 (S)-methylmalonyl-CoA + malonyl-CoA + 5 NADPH + 11 H(+) = 10-deoxymethynolide + 6 CO2 + 5 NADP(+) + 6 CoA + 2 H2O. The enzyme catalyses 6 (S)-methylmalonyl-CoA + malonyl-CoA + 5 NADPH + 12 H(+) = narbonolide + 7 CO2 + 5 NADP(+) + 7 CoA + 2 H2O. It participates in antibiotic biosynthesis. Irreversibly inhibited by (2S,3R,4S)-2,4-dihydroxy-3-methylhexyl-phosphonic acid and (3R,4S)-4-hydroxy-3-methyl-2-oxohexyl-phosphonic acid. Functionally, involved in the biosynthesis of 12- and 14-membered ring macrolactone antibiotics such as methymycin and neomethymycin, and pikromycin and narbomycin, respectively. Component of the pikromycin PKS which catalyzes the biosynthesis of both precursors 10-deoxymethynolide (12-membered ring macrolactone) and narbonolide (14-membered ring macrolactone). Chain elongation through PikAI, PikAII and PikAIII followed by thioesterase catalyzed termination results in the production of 10-deoxymethynolide, while continued elongation through PikAIV, followed by thioesterase (TE) catalyzed cyclization results in the biosynthesis of the narbonolide. The thioesterase can use a series of diketide-N-acetylcysteamine (SNAC) thioesters, but has a strong preference for the 2-methyl-3-ketopentanoyl-SNAC over the stereoisomers of 2-methyl-3-hydroxyacyl-SNAC. The chain is Pikromycin polyketide synthase component PikAIV from Streptomyces venezuelae.